The following is a 90-amino-acid chain: uncharacterized protein (90 aa).

A coiled-coil region spans residues 36 to 82 (DQEYSDAQMQLEDAVNALNKLWLSSNDQQREQLYRMRLQLQSLQNNM).

This is an uncharacterized protein from Bacillus subtilis (strain 168).